A 207-amino-acid polypeptide reads, in one-letter code: dTTP/UTP pyrophosphatase (207 aa).

D80 functions as the Proton acceptor in the catalytic mechanism.

This sequence belongs to the Maf family. YhdE subfamily. The cofactor is a divalent metal cation.

The protein resides in the cytoplasm. It carries out the reaction dTTP + H2O = dTMP + diphosphate + H(+). The enzyme catalyses UTP + H2O = UMP + diphosphate + H(+). In terms of biological role, nucleoside triphosphate pyrophosphatase that hydrolyzes dTTP and UTP. May have a dual role in cell division arrest and in preventing the incorporation of modified nucleotides into cellular nucleic acids. This chain is dTTP/UTP pyrophosphatase (maf1), found in Agrobacterium fabrum (strain C58 / ATCC 33970) (Agrobacterium tumefaciens (strain C58)).